A 326-amino-acid polypeptide reads, in one-letter code: Vitamin B12 import system permease protein BtuC (326 aa).

9 helical membrane-spanning segments follow: residues 15–35, 61–81, 88–108, 112–132, 146–166, 184–204, 240–260, 274–294, and 302–322; these read WLLC…CAGE, LAVL…QALF, PGLL…VLLG, LPNW…TLIL, LLAG…AIYF, GGVD…LLWI, GWMV…GLVI, VLLP…DIVA, and ELPI…WLLL.

It belongs to the binding-protein-dependent transport system permease family. FecCD subfamily. As to quaternary structure, the complex is composed of two ATP-binding proteins (BtuD), two transmembrane proteins (BtuC) and a solute-binding protein (BtuF).

Its subcellular location is the cell inner membrane. Functionally, part of the ABC transporter complex BtuCDF involved in vitamin B12 import. Involved in the translocation of the substrate across the membrane. The sequence is that of Vitamin B12 import system permease protein BtuC from Escherichia coli O9:H4 (strain HS).